The following is a 115-amino-acid chain: Small ribosomal subunit protein uS14m (115 aa).

Belongs to the universal ribosomal protein uS14 family. As to quaternary structure, component of the mitochondrial small ribosomal subunit (mt-SSU). Mature yeast 74S mitochondrial ribosomes consist of a small (37S) and a large (54S) subunit. The 37S small subunit contains a 15S ribosomal RNA (15S mt-rRNA) and 34 different proteins. The 54S large subunit contains a 21S rRNA (21S mt-rRNA) and 46 different proteins.

It localises to the mitochondrion. Component of the mitochondrial ribosome (mitoribosome), a dedicated translation machinery responsible for the synthesis of mitochondrial genome-encoded proteins, including at least some of the essential transmembrane subunits of the mitochondrial respiratory chain. The mitoribosomes are attached to the mitochondrial inner membrane and translation products are cotranslationally integrated into the membrane. This chain is Small ribosomal subunit protein uS14m (MRP2), found in Saccharomyces cerevisiae (strain ATCC 204508 / S288c) (Baker's yeast).